Reading from the N-terminus, the 263-residue chain is Elongin-A (263 aa).

2 disordered regions span residues 112–147 and 170–263; these read KLEQ…YCPK and SATS…PKRI. 2 stretches are compositionally biased toward polar residues: residues 186–206 and 214–229; these read RSSS…NTYP and SFTS…VKTQ. Positions 230 to 245 are enriched in low complexity; that stretch reads PSSSSSPSISRPTSFP. The segment covering 253-263 has biased composition (polar residues); it reads SRFSSQVPKRI.

This sequence belongs to the ELA1 family. As to quaternary structure, heterodimer with elc1. Component of a CRL3 E3 ubiquitin ligase complex consisting of a cullin, the linker protein elc1, the substrate receptor pof4/ela1, and the RING protein rbx1. Interacts with skp1.

Functionally, as part of the CRL3 E3 ubiquitin ligase complex; polyubiquitylates monoubiquitylated RNA polymerase II subunit rpb1 to trigger its proteolysis; plays a role in global genomic repair. The sequence is that of Elongin-A (pof4) from Schizosaccharomyces pombe (strain 972 / ATCC 24843) (Fission yeast).